The chain runs to 122 residues: Large ribosomal subunit protein uL14 (122 aa).

The protein belongs to the universal ribosomal protein uL14 family. Part of the 50S ribosomal subunit. Forms a cluster with proteins L3 and L19. In the 70S ribosome, L14 and L19 interact and together make contacts with the 16S rRNA in bridges B5 and B8.

Functionally, binds to 23S rRNA. Forms part of two intersubunit bridges in the 70S ribosome. The protein is Large ribosomal subunit protein uL14 of Streptococcus uberis (strain ATCC BAA-854 / 0140J).